The sequence spans 245 residues: Spore membrane assembly protein 1 (245 aa).

Involved in spore and ascus formation. Required for the efficient assembly of the precursors of the prospore membrane to a continuous prospore membrane. In Saccharomyces cerevisiae (strain ATCC 204508 / S288c) (Baker's yeast), this protein is Spore membrane assembly protein 1 (SMA1).